The chain runs to 442 residues: Histidinol dehydrogenase (442 aa).

Residues Tyr-138, Gln-199, and Asn-222 each coordinate NAD(+). Substrate contacts are provided by Ser-245, Gln-267, and His-270. The Zn(2+) site is built by Gln-267 and His-270. Residues Glu-335 and His-336 each act as proton acceptor in the active site. Residues His-336, Asp-369, Glu-423, and His-428 each coordinate substrate. Zn(2+) is bound at residue Asp-369. His-428 serves as a coordination point for Zn(2+).

The protein belongs to the histidinol dehydrogenase family. Requires Zn(2+) as cofactor.

The enzyme catalyses L-histidinol + 2 NAD(+) + H2O = L-histidine + 2 NADH + 3 H(+). It functions in the pathway amino-acid biosynthesis; L-histidine biosynthesis; L-histidine from 5-phospho-alpha-D-ribose 1-diphosphate: step 9/9. In terms of biological role, catalyzes the sequential NAD-dependent oxidations of L-histidinol to L-histidinaldehyde and then to L-histidine. This chain is Histidinol dehydrogenase, found in Ralstonia nicotianae (strain ATCC BAA-1114 / GMI1000) (Ralstonia solanacearum).